Reading from the N-terminus, the 73-residue chain is uncharacterized protein (73 aa).

This is an uncharacterized protein from Sinorhizobium fredii (strain NBRC 101917 / NGR234).